The primary structure comprises 403 residues: Ribose-phosphate pyrophosphokinase 1, chloroplastic (403 aa).

A chloroplast-targeting transit peptide spans 1 to 49; it reads MASLGLSFPPAAKTPTYLASSSSTFFSNSSLSVRTSQFRSRNSVFACVK. Mg(2+)-binding residues include D217, H219, D228, and D232. The binding of phosphoribosylpyrophosphate stretch occupies residues 303–318; that stretch reads GKVAIMVDDMIDTAGT.

It belongs to the ribose-phosphate pyrophosphokinase family. The cofactor is Mg(2+).

The protein resides in the plastid. It localises to the chloroplast. It catalyses the reaction D-ribose 5-phosphate + ATP = 5-phospho-alpha-D-ribose 1-diphosphate + AMP + H(+). This is Ribose-phosphate pyrophosphokinase 1, chloroplastic (PRS1) from Arabidopsis thaliana (Mouse-ear cress).